The primary structure comprises 481 residues: Proline--tRNA ligase 2 (481 aa).

Belongs to the class-II aminoacyl-tRNA synthetase family. ProS type 3 subfamily. As to quaternary structure, homodimer.

The protein localises to the cytoplasm. It catalyses the reaction tRNA(Pro) + L-proline + ATP = L-prolyl-tRNA(Pro) + AMP + diphosphate. Catalyzes the attachment of proline to tRNA(Pro) in a two-step reaction: proline is first activated by ATP to form Pro-AMP and then transferred to the acceptor end of tRNA(Pro). In Clostridioides difficile (strain 630) (Peptoclostridium difficile), this protein is Proline--tRNA ligase 2.